The chain runs to 107 residues: Ig kappa chain V-VI region SAPC 10 (107 aa).

The segment at 1–23 is framework-1; that stretch reads EIVLTQSPAITAASLGQKVTITC. A disulfide bond links cysteine 23 and cysteine 87. Positions 24–33 are complementarity-determining-1; that stretch reads SASSSVSYMH. The segment at 34–48 is framework-2; it reads WYQQKSGTSPKPWIY. Residues 49 to 55 are complementarity-determining-2; the sequence is EISKLAS. Residues 56 to 87 form a framework-3 region; that stretch reads GVPARFSGSGSGTSYSLTISSMEAEDAAIYYC. The segment at 88–96 is complementarity-determining-3; sequence QQWNYPLIT. A framework-4 region spans residues 97–106; sequence FGGGTKLEIK.

In Mus musculus (Mouse), this protein is Ig kappa chain V-VI region SAPC 10.